We begin with the raw amino-acid sequence, 299 residues long: Peroxisomal biogenesis factor 19 (299 aa).

Alanine 2 carries the post-translational modification N-acetylalanine. Positions 2-56 are docking to the peroxisome membrane and binding to PEX3; it reads AAAEGGCGAGVEADRELEELLESALDDFDKAKPSPAPSPTISAPDASGPQKRSPG. Residues 2–91 form a necessary for PEX19 function on peroxisome biogenesis region; the sequence is AAAEGGCGAG…QATAEFEKAM (90 aa). The interval 25-63 is disordered; sequence ALDDFDKAKPSPAPSPTISAPDASGPQKRSPGDTAKDAL. Serine 35, serine 39, serine 54, and serine 66 each carry phosphoserine. Phosphothreonine is present on threonine 236. Residue cysteine 296 is modified to Cysteine methyl ester. Cysteine 296 carries S-farnesyl cysteine lipidation. Residues 297–299 constitute a propeptide, removed in mature form; the sequence is LIM.

It belongs to the peroxin-19 family. In terms of assembly, interacts with a broad range of peroxisomal membrane proteins, including PEX3, PEX10, PEX11A, PEX11B, PEX12, PEX13, PEX14 and PEX16, PXMP2/PMP22, PXMP4/PMP24, SLC25A17/PMP34, ABCD1/ALDP, ABCD2/ALDRP, and ABCD3/PMP70. Also interacts with the tumor suppressor CDKN2A/p19ARF.

It localises to the cytoplasm. The protein localises to the peroxisome membrane. Its function is as follows. Necessary for early peroxisomal biogenesis. Acts both as a cytosolic chaperone and as an import receptor for peroxisomal membrane proteins (PMPs). Binds and stabilizes newly synthesized PMPs in the cytoplasm by interacting with their hydrophobic membrane-spanning domains, and targets them to the peroxisome membrane by binding to the integral membrane protein PEX3. Excludes CDKN2A from the nucleus and prevents its interaction with MDM2, which results in active degradation of TP53. The chain is Peroxisomal biogenesis factor 19 (Pex19) from Rattus norvegicus (Rat).